A 75-amino-acid polypeptide reads, in one-letter code: Tautomerase PptA (75 aa).

Pro-2 serves as the catalytic Proton acceptor; via imino nitrogen.

The protein belongs to the 4-oxalocrotonate tautomerase family. PptA subfamily. As to quaternary structure, homodimer.

The protein localises to the cytoplasm. In Escherichia coli O127:H6 (strain E2348/69 / EPEC), this protein is Tautomerase PptA.